A 284-amino-acid chain; its full sequence is Bifunctional protein FolD (284 aa).

Residues 164–166, T189, and I230 each bind NADP(+); that span reads GRG.

The protein belongs to the tetrahydrofolate dehydrogenase/cyclohydrolase family. Homodimer.

The enzyme catalyses (6R)-5,10-methylene-5,6,7,8-tetrahydrofolate + NADP(+) = (6R)-5,10-methenyltetrahydrofolate + NADPH. It carries out the reaction (6R)-5,10-methenyltetrahydrofolate + H2O = (6R)-10-formyltetrahydrofolate + H(+). It participates in one-carbon metabolism; tetrahydrofolate interconversion. In terms of biological role, catalyzes the oxidation of 5,10-methylenetetrahydrofolate to 5,10-methenyltetrahydrofolate and then the hydrolysis of 5,10-methenyltetrahydrofolate to 10-formyltetrahydrofolate. In Pelotomaculum thermopropionicum (strain DSM 13744 / JCM 10971 / SI), this protein is Bifunctional protein FolD.